Consider the following 147-residue polypeptide: Ubiquitin-conjugating enzyme E2 D3 (147 aa).

The 147-residue stretch at 1–147 (MALKRINKEL…SREWTQKYAM (147 aa)) folds into the UBC core domain. Cysteines 21 and 107 form a disulfide. The Glycyl thioester intermediate role is filled by cysteine 85.

This sequence belongs to the ubiquitin-conjugating enzyme family. Interacts with SCF (SKP1-CUL1-F-box protein) E3 ubiquitin ligase complex; when Cullin is neddylated, the interaction between the E2 and the SCF complex is strengthened. Interacts with DAPK3. Interacts with BRCA1; the DNA damage checkpoint promotes the association with BRCA1 after ionizing radiation. Interacts non-covalently with ubiquitin. Interacts with E3 ubiquitin-protein ligase CBLC. Interacts with UBTD1. Interacts with RIGI and RNF135; involved in RIGI ubiquitination and activation. In terms of processing, phosphorylated by AURKB.

The protein localises to the cell membrane. Its subcellular location is the endosome membrane. The enzyme catalyses S-ubiquitinyl-[E1 ubiquitin-activating enzyme]-L-cysteine + [E2 ubiquitin-conjugating enzyme]-L-cysteine = [E1 ubiquitin-activating enzyme]-L-cysteine + S-ubiquitinyl-[E2 ubiquitin-conjugating enzyme]-L-cysteine.. The catalysed reaction is S-ubiquitinyl-[E1 ubiquitin-activating enzyme]-L-cysteine + [acceptor protein]-L-lysine = [E1 ubiquitin-activating enzyme]-L-cysteine + N(6)-monoubiquitinyl-[acceptor protein]-L-lysine.. Its pathway is protein modification; protein ubiquitination. Accepts ubiquitin from the E1 complex and catalyzes its covalent attachment to other proteins. In vitro catalyzes 'Lys-11'-, as well as 'Lys-48'-linked polyubiquitination. Cooperates with the E2 CDC34 and the SCF(FBXW11) E3 ligase complex for the polyubiquitination of NFKBIA leading to its subsequent proteasomal degradation. Acts as an initiator E2, priming the phosphorylated NFKBIA target at positions 'Lys-21' and/or 'Lys-22' with a monoubiquitin. Ubiquitin chain elongation is then performed by CDC34, building ubiquitin chains from the UBE2D3-primed NFKBIA-linked ubiquitin. Also acts as an initiator E2, in conjunction with RNF8, for the priming of PCNA. Monoubiquitination of PCNA, and its subsequent polyubiquitination, are essential events in the operation of the DNA damage tolerance (DDT) pathway that is activated after DNA damage caused by UV or chemical agents during S-phase. Associates with the BRCA1/BARD1 E3 ligase complex to perform ubiquitination at DNA damage sites following ionizing radiation leading to DNA repair. Targets DAPK3 for ubiquitination which influences promyelocytic leukemia protein nuclear body (PML-NB) formation in the nucleus. In conjunction with the MDM2 and TOPORS E3 ligases, functions ubiquitination of p53/TP53. In conjunction with the CBL E3 ligase, targets EGFR for polyubiquitination at the plasma membrane as well as during its internalization and transport on endosomes. In conjunction with the STUB1 E3 quality control E3 ligase, ubiquitinates unfolded proteins to catalyze their immediate destruction. Together with RNF135, catalyzes the viral RNA-dependent 'Lys-63'-linked polyubiquitination of RIGI to activate the downstream signaling pathway that leads to interferon beta production. Together with ZNF598, catalyzes ubiquitination of 40S ribosomal proteins in response to ribosome collisions. In cooperation with the GATOR2 complex, catalyzes 'Lys-6'-linked ubiquitination of NPRL2. The chain is Ubiquitin-conjugating enzyme E2 D3 (UBE2D3) from Bos taurus (Bovine).